The following is an 818-amino-acid chain: Probable beta-glucosidase I (818 aa).

Asn176 is a glycosylation site (N-linked (GlcNAc...) asparagine). Residue Asp204 is part of the active site. One can recognise a PA14 domain in the interval 374–534; sequence DGKPGFTFRV…SQEELISNAV (161 aa). N-linked (GlcNAc...) asparagine glycans are attached at residues Asn453 and Asn472.

This sequence belongs to the glycosyl hydrolase 3 family.

The protein localises to the secreted. It catalyses the reaction Hydrolysis of terminal, non-reducing beta-D-glucosyl residues with release of beta-D-glucose.. It participates in glycan metabolism; cellulose degradation. Its function is as follows. Beta-glucosidases are one of a number of cellulolytic enzymes involved in the degradation of cellulosic biomass. Catalyzes the last step releasing glucose from the inhibitory cellobiose. This chain is Probable beta-glucosidase I (bglI), found in Aspergillus niger (strain ATCC MYA-4892 / CBS 513.88 / FGSC A1513).